Reading from the N-terminus, the 338-residue chain is Cinnamoyl-CoA reductase 1 (338 aa).

NADP(+)-binding positions include 22–28 (GAGGFIG), arginine 47, lysine 53, 73–74 (DV), 93–95 (VAS), tyrosine 165, lysine 169, 192–195 (PSMT), and serine 207. The cysteines at positions 158 and 166 are disulfide-linked. The Proton donor role is filled by lysine 169.

Belongs to the NAD(P)-dependent epimerase/dehydratase family. Dihydroflavonol-4-reductase subfamily. In terms of assembly, interacts with RAC1 in a GTP-dependent manner.

Its subcellular location is the cytoplasm. It catalyses the reaction (E)-cinnamaldehyde + NADP(+) + CoA = (E)-cinnamoyl-CoA + NADPH + H(+). It functions in the pathway aromatic compound metabolism; phenylpropanoid biosynthesis. With respect to regulation, activated by the small GTPase RAC1. In terms of biological role, involved in the latter stages of lignin biosynthesis. Catalyzes one of the last steps of monolignol biosynthesis, the conversion of cinnamoyl-CoAs into their corresponding cinnamaldehydes. Probably involved in the formation of lignin in defense responses. The sequence is that of Cinnamoyl-CoA reductase 1 from Oryza sativa subsp. japonica (Rice).